A 163-amino-acid chain; its full sequence is NADH-quinone oxidoreductase subunit 9 (163 aa).

4Fe-4S ferredoxin-type domains lie at 54–84 (LRRY…IDAE) and 94–123 (TRYD…EGPN). Residues Cys64, Cys67, Cys70, Cys74, Cys103, Cys106, Cys109, and Cys113 each contribute to the [4Fe-4S] cluster site.

Belongs to the complex I 23 kDa subunit family. In terms of assembly, NDH-1 is composed of at least 14 different subunits, Nqo1 to Nqo14. The complex has a L-shaped structure, with the hydrophobic arm (subunits Nqo7, Nqo8, Nqo10 to Nqo14) embedded in the inner membrane and the hydrophilic peripheral arm (subunits Nqo1 to Nqo6, Nqo9) protruding into the bacterial cytoplasm. The hydrophilic domain contains all the redox centers. [4Fe-4S] cluster is required as a cofactor.

It localises to the cell inner membrane. It catalyses the reaction a quinone + NADH + 5 H(+)(in) = a quinol + NAD(+) + 4 H(+)(out). Its function is as follows. NDH-1 shuttles electrons from NADH, via FMN and iron-sulfur (Fe-S) centers, to quinones in the respiratory chain. The immediate electron acceptor for the enzyme in this species is believed to be ubiquinone. Couples the redox reaction to proton translocation (for every two electrons transferred, four hydrogen ions are translocated across the cytoplasmic membrane), and thus conserves the redox energy in a proton gradient. This chain is NADH-quinone oxidoreductase subunit 9, found in Paracoccus denitrificans.